We begin with the raw amino-acid sequence, 358 residues long: DnaJ homolog subfamily C member 18 (358 aa).

The 65-residue stretch at 82–146 (NYYEILGVSR…DKRLRYDEYG (65 aa)) folds into the J domain. Residues 228 to 248 (AFIQLLPVLVIVIISVITQLL) form a helical membrane-spanning segment.

It localises to the endoplasmic reticulum membrane. The sequence is that of DnaJ homolog subfamily C member 18 (DNAJC18) from Bos taurus (Bovine).